The sequence spans 759 residues: MACTGPSLSGAFDILGAAGQDKLLYLKHKLKTLRPGCRGAYLLHAMVLLKLGQETEARISLEALKADAVAQLVARQWAGVDSTETPEEPPDLSWAVARVYHLLTEEKLCPATMREEAYRAALRAFRSRDDLQLGELQEEARDRCGWDVLGDLGGVQTLRSDLGCLPPSSASLSRTRSDPRPIEHLSGWSTACSLRSTGSPASLGSNLEISQSPTMALLSVHHSHHGPSKLCDHPQASVVPEPAPMGCQEPEEMSWPPSVEAADSPVRPSSPGPGLPEVTTDACPASPHDPPEVPEISAHYPVECTDVPAAPKSLPSPSKNTCLVTDQTPVQLSEEDTAYLSAQPRPPTPSVPQTSPSFPSASTSPFPSPSTPPEAHPTPSKAHPTPPKAHSTPPKAHPTSPKAHPTSPKAHPTVWNPEPPPPELESSEQKFYNFVVLHASADEHIALRVRERLEALGVHDGATFCEDFQVPGRGELHCLQDALDHSAFIILLLTSNFDCRLSQHQTNQSLMSSLTRHGWQDCVIPFLPLESSLAQLSPSTSSLLTGLVLLDEHSKIFARKVTNTFKPQMLRARKAKWRKEQDARALREQSQQLESERQHAAAWGAAYSAYVHSYLAYQTQVEKLQVALANYMPFGTQLPFGGQGSLGTPPSSFPTLPGHQPPPLPPWLGGTPPPIFPQPPQTFPQPPPTFPQPPPTFQQPPPACPQPLDFSQAPPARPQSPGLQPLIIHHAQMVQLGVNNHMWNQRGTQAPEDNTRETE.

The tract at residues 1 to 153 (MACTGPSLSG…CGWDVLGDLG (153 aa)) is TRIF-NTD. Positions 84–91 (ETPEEPPD) match the TRAF6-binding motif. Residues 207–210 (LEIS) carry the pLxIS motif motif. Serine 210 carries the phosphoserine modification. Residue lysine 229 forms a Glycyl lysine isopeptide (Lys-Gly) (interchain with G-Cter in ubiquitin) linkage. The segment at 241-296 (EPAPMGCQEPEEMSWPPSVEAADSPVRPSSPGPGLPEVTTDACPASPHDPPEVPEI) is disordered. Short sequence motifs (TRAF6-binding) lie at residues 248 to 255 (QEPEEMSW) and 299 to 309 (HYPVECTDVPA). Residues 340–426 (LSAQPRPPTP…PEPPPPELES (87 aa)) form a disordered region. Positions 351 to 365 (VPQTSPSFPSASTSP) are enriched in low complexity. Over residues 366-376 (FPSPSTPPEAH) the composition is skewed to pro residues. One can recognise a TIR domain in the interval 430 to 590 (KFYNFVVLHA…QDARALREQS (161 aa)). Positions 549 to 759 (LLDEHSKIFA…APEDNTRETE (211 aa)) are sufficient to induce apoptosis. Positions 642 to 723 (GQGSLGTPPS…PPARPQSPGL (82 aa)) are disordered. The span at 659–705 (HQPPPLPPWLGGTPPPIFPQPPQTFPQPPPTFPQPPPTFQQPPPACP) shows a compositional bias: pro residues.

As to quaternary structure, homodimer. Found in a multi-helicase-TICAM1 complex at least composed of DHX36, DDX1, DDX21 and TICAM1; this complex exists in resting cells with or without poly(I:C) RNA ligand stimulation. Interacts (via TIR domain) with DDX21 (via C-terminus). Interacts (via TIR domain) with DHX36 (via C-terminus). Interacts with AZI2 and IRF7. Interacts with TICAM2 in TLR4 recruitment. Interaction with PIAS4 inhibits the TICAM1-induced NF-kappa-B, IRF and IFNB1 activation. Interacts with IKBKB and IKBKE. Interaction with SARM1 blocks TICAM1-dependent transcription factor activation. Interacts with TRAF3. Interacts (when phosphorylated) with IRF3; following activation and phosphorylation on the pLxIS motif by TBK1, recruits IRF3. Interacts with TBK1, TRAF6 and RIPK1 and these interactions are enhanced in the presence of WDFY1. Interacts with TRAFD1. Interacts with UBQLN1 (via UBA domain). Interacts with TLR4 in response to LPS in a WDFY1-dependent manner. Interacts with WDFY1 in response to poly(I:C). Interacts (via the TIR domain) with TLR3 in response to poly(I:C) and this interaction is enhanced in the presence of WDFY1. Interacts with TRIM56. Component of a multi-helicase-TICAM1 complex that acts as a cytoplasmic sensor of viral double-stranded RNA (dsRNA) and plays a role in the activation of a cascade of antiviral responses including the induction of pro-inflammatory cytokines. Interacts (via the TIR domain) with TLR5. Interacts with TRIM8. Interacts with TAX1BP1 and TRIM32; these interactions target TICAM1 to TAX1BP1-mediated selective autophagic degradation. Interacts with DDX50. Post-translationally, phosphorylated by TBK1. Following activation, phosphorylated by TBK1 at Ser-210 in the pLxIS motif. The phosphorylated pLxIS motif constitutes an IRF3-binding motif, leading to recruitment of the transcription factor IRF3 to induce type-I interferons and other cytokines. Polyubiquitinated at Lys-229 by TRIM38 with 'Lys-48'-linked chains, leading to proteasomal degradation. Polyubiquitinated with 'Lys-6' and 'Lys-33'-linked chains in a TRIM8-dependent manner.

The protein resides in the cytoplasmic vesicle. It is found in the autophagosome. The protein localises to the cytoplasm. Its subcellular location is the cytosol. It localises to the mitochondrion. Functionally, involved in innate immunity against invading pathogens. Adapter used by TLR3, TLR4 (through TICAM2) and TLR5 to mediate NF-kappa-B and interferon-regulatory factor (IRF) activation, and to induce apoptosis. Ligand binding to these receptors results in TRIF recruitment through its TIR domain. Distinct protein-interaction motifs allow recruitment of the effector proteins TBK1, TRAF6 and RIPK1, which in turn, lead to the activation of transcription factors IRF3 and IRF7, NF-kappa-B and FADD respectively. Phosphorylation by TBK1 on the pLxIS motif leads to recruitment and subsequent activation of the transcription factor IRF3 to induce expression of type I interferon and exert a potent immunity against invading pathogens. Component of a multi-helicase-TICAM1 complex that acts as a cytoplasmic sensor of viral double-stranded RNA (dsRNA) and plays a role in the activation of a cascade of antiviral responses including the induction of pro-inflammatory cytokines. The sequence is that of TIR domain-containing adapter molecule 1 (TICAM1) from Bos taurus (Bovine).